The primary structure comprises 78 residues: Large ribosomal subunit protein bL28 (78 aa).

This sequence belongs to the bacterial ribosomal protein bL28 family.

This chain is Large ribosomal subunit protein bL28, found in Dichelobacter nodosus (strain VCS1703A).